We begin with the raw amino-acid sequence, 116 residues long: Iron-sulfur cluster insertion protein ErpA (116 aa).

Iron-sulfur cluster is bound by residues cysteine 44, cysteine 108, and cysteine 110.

The protein belongs to the HesB/IscA family. As to quaternary structure, homodimer. Iron-sulfur cluster is required as a cofactor.

Required for insertion of 4Fe-4S clusters for at least IspG. This chain is Iron-sulfur cluster insertion protein ErpA, found in Pseudomonas fluorescens (strain ATCC BAA-477 / NRRL B-23932 / Pf-5).